Here is a 121-residue protein sequence, read N- to C-terminus: Basic phospholipase A2 homolog BaTX (121 aa).

Intrachain disulfides connect Cys-26–Cys-115, Cys-28–Cys-44, Cys-43–Cys-95, Cys-49–Cys-121, Cys-50–Cys-88, Cys-57–Cys-81, and Cys-75–Cys-86. Residues 105–117 (KKYRYYLKPLCKK) are important for membrane-damaging activities in eukaryotes and bacteria; heparin-binding.

Belongs to the phospholipase A2 family. Group II subfamily. K49 sub-subfamily. Homodimer; non-covalently linked. Expressed by the venom gland.

It is found in the secreted. Its function is as follows. Snake venom phospholipase A2 homolog that lacks enzymatic activity. Is myotoxic and displays edema-inducing activities. In vitro, produced time-dependent, irreversible neuromuscular blockade in isolated mouse phrenic nerve-diaphragm and chick biventer cervicis preparations. A model of myotoxic mechanism has been proposed: an apo Lys49-PLA2 is activated by the entrance of a hydrophobic molecule (e.g. fatty acid) at the hydrophobic channel of the protein leading to a reorientation of a monomer. This reorientation causes a transition between 'inactive' to 'active' states, causing alignment of C-terminal and membrane-docking sites (MDoS) side-by-side and putting the membrane-disruption sites (MDiS) in the same plane, exposed to solvent and in a symmetric position for both monomers. The MDoS region stabilizes the toxin on membrane by the interaction of charged residues with phospholipid head groups. Subsequently, the MDiS region destabilizes the membrane with penetration of hydrophobic residues. This insertion causes a disorganization of the membrane, allowing an uncontrolled influx of ions (i.e. calcium and sodium), and eventually triggering irreversible intracellular alterations and cell death. The protein is Basic phospholipase A2 homolog BaTX of Bothrops alternatus (Urutu).